A 1588-amino-acid polypeptide reads, in one-letter code: Ubiquitin carboxyl-terminal hydrolase 54 (1588 aa).

At Arg12 the chain carries Omega-N-methylarginine. Residues 31–352 (KGLSNEPGQN…QPLLLLYADP (322 aa)) enclose the USP domain. Cys42 serves as the catalytic Nucleophile. Residues His67, Cys69, Cys74, Cys77, His133, Cys145, Cys150, His153, Cys166, Cys169, Cys225, and Cys229 each contribute to the Zn(2+) site. His302 acts as the Proton acceptor in catalysis. Basic and acidic residues-rich tracts occupy residues 382–391 (GHLTDSECNQ) and 424–434 (SEGETLKEKQA). Disordered regions lie at residues 382–519 (GHLT…PTWR), 555–577 (FTPD…RSQH), and 601–624 (ESGY…PPDS). Ser424 bears the Phosphoserine mark. Positions 453-471 (TVSNMIHSRPSLASQTSAG) are enriched in polar residues. A compositionally biased stretch (low complexity) spans 499-513 (TESTSSEAKSSSSSK). A compositionally biased stretch (basic and acidic residues) spans 555-572 (FTPDEVSKPTANDIKDGG). Over residues 601-616 (ESGYESSERNSSSPVS) the composition is skewed to low complexity. 2 positions are modified to phosphoserine: Ser613 and Ser616. Residues 682-712 (ELDELQEEVVRRAQEQELRKKREKELEAAKG) adopt a coiled-coil conformation. Disordered regions lie at residues 801–834 (RSLQ…PQPT), 1089–1182 (QNTS…PDMY), 1221–1242 (SQVK…SHPR), and 1491–1561 (WGNL…RSPG). Positions 808-826 (QQQASSQQPVQPSASLPSQ) are enriched in low complexity. The segment covering 1126 to 1147 (GREHCRWVKQPRSPDGRERPPC) has biased composition (basic and acidic residues). Ser1138 carries the post-translational modification Phosphoserine. Polar residues predominate over residues 1510 to 1524 (PSSNLHVPLRSTWNS). Positions 1536 to 1547 (RRIDMPPDDDWR) are enriched in basic and acidic residues.

It belongs to the peptidase C19 family.

The catalysed reaction is Thiol-dependent hydrolysis of ester, thioester, amide, peptide and isopeptide bonds formed by the C-terminal Gly of ubiquitin (a 76-residue protein attached to proteins as an intracellular targeting signal).. Deubiquitinase that specifically mediates 'Lys-63'-linked deubiquitination of substrates with a polyubiquitin chain composed of at least 3 ubiquitins. Specifically recognizes ubiquitin chain in position S2 and catalyzes cleavage of polyubiquitin within 'Lys-63'-linked chains. Not able to deubiquitinate substrates with shorter ubiquitin chains. Mediates deubiquitination of PLK4, maintaining PLK4 stability by reducing its ubiquitination-mediated degradation. This chain is Ubiquitin carboxyl-terminal hydrolase 54 (Usp54), found in Mus musculus (Mouse).